We begin with the raw amino-acid sequence, 179 residues long: Inner membrane-spanning protein YciB (179 aa).

The next 5 membrane-spanning stretches (helical) occupy residues I22–V42, M50–N70, W76–M96, L121–L141, and F149–I169.

The protein belongs to the YciB family.

The protein localises to the cell inner membrane. Plays a role in cell envelope biogenesis, maintenance of cell envelope integrity and membrane homeostasis. The polypeptide is Inner membrane-spanning protein YciB (Salmonella arizonae (strain ATCC BAA-731 / CDC346-86 / RSK2980)).